The following is a 247-amino-acid chain: Carboxy-S-adenosyl-L-methionine synthase (247 aa).

S-adenosyl-L-methionine-binding positions include Y40, 65–67 (GCS), 90–91 (DN), 122–123 (DI), N137, and R204.

This sequence belongs to the class I-like SAM-binding methyltransferase superfamily. Cx-SAM synthase family. In terms of assembly, homodimer.

It catalyses the reaction prephenate + S-adenosyl-L-methionine = carboxy-S-adenosyl-L-methionine + 3-phenylpyruvate + H2O. Its function is as follows. Catalyzes the conversion of S-adenosyl-L-methionine (SAM) to carboxy-S-adenosyl-L-methionine (Cx-SAM). The chain is Carboxy-S-adenosyl-L-methionine synthase from Pseudomonas syringae pv. tomato (strain ATCC BAA-871 / DC3000).